Consider the following 215-residue polypeptide: Probable serine/threonine-protein kinase 2 (215 aa).

In terms of domain architecture, Protein kinase spans 1 to 205; sequence MKPEQLVYLN…WLLKEMEQLL (205 aa).

This sequence belongs to the protein kinase superfamily. Ser/Thr protein kinase family. Interacts with the kinase domain of host EIF2AK2.

The protein resides in the host cytoplasm. The enzyme catalyses L-seryl-[protein] + ATP = O-phospho-L-seryl-[protein] + ADP + H(+). It catalyses the reaction L-threonyl-[protein] + ATP = O-phospho-L-threonyl-[protein] + ADP + H(+). Its function is as follows. Plays a role in the inhibition of host eIF2alpha/EIF2S1 phosphorylation, thereby increasing viral fitness. In the insect host, targets the endogenous insect heme-regulated inhibitor (HRI)-like eIF2alpha kinase. The protein is Probable serine/threonine-protein kinase 2 (PK2) of Autographa californica nuclear polyhedrosis virus (AcMNPV).